Consider the following 811-residue polypeptide: Phenylalanine--tRNA ligase beta subunit (811 aa).

A tRNA-binding domain is found at 40 to 156 (AEKNENIVVG…EDIEVGSKVD (117 aa)). Residues 411-486 (KSTKEVKVPL…RIHGYDHLPY (76 aa)) form the B5 domain. 4 residues coordinate Mg(2+): aspartate 464, aspartate 470, glutamate 473, and glutamate 474. Residues 717–810 (PRYPSVSRDI…VNKKFGSYVR (94 aa)) form the FDX-ACB domain.

The protein belongs to the phenylalanyl-tRNA synthetase beta subunit family. Type 1 subfamily. In terms of assembly, tetramer of two alpha and two beta subunits. It depends on Mg(2+) as a cofactor.

It localises to the cytoplasm. The enzyme catalyses tRNA(Phe) + L-phenylalanine + ATP = L-phenylalanyl-tRNA(Phe) + AMP + diphosphate + H(+). The protein is Phenylalanine--tRNA ligase beta subunit of Oceanobacillus iheyensis (strain DSM 14371 / CIP 107618 / JCM 11309 / KCTC 3954 / HTE831).